The sequence spans 695 residues: Sodium-dependent phosphate transport protein 2B (695 aa).

A disordered region spans residues 1 to 44; sequence MAPWPELENAHPNPNKFIEGASGPQSSIPDKDKGTSKTNDSGTP. At 1–90 the chain is on the cytoplasmic side; that stretch reads MAPWPELENA…KWSERDSKGK (90 aa). The helical transmembrane segment at 91-111 threads the bilayer; the sequence is ILCIFQGIGKFILLLGFLYLF. At 112-136 the chain is on the extracellular side; the sequence is VCSLDVLSSAFQLVGGKMAGQFFSN. Residues 137–157 traverse the membrane as a helical segment; the sequence is NSIMSNPVAGLVIGVLVTVMV. Residues 158–213 are Cytoplasmic-facing; that stretch reads QSSSTSSSIIVSMVASSLLSVRAAIPIIMGANIGTSITNTIVALMQAGDRNEFRRA. Residues 214-234 form a helical membrane-spanning segment; sequence FAGATVHDFFNWLSVLVLLPL. Residues 235–363 lie on the Extracellular side of the membrane; that stretch reads EAATHYLEKL…FVNFSLPDLA (129 aa). N-linked (GlcNAc...) asparagine glycans are attached at residues N295, N313, N321, N340, and N356. A disulfide bridge links C303 with C350. Residues 364 to 384 form a helical membrane-spanning segment; it reads VGIILLTVSLLILCGCLIMIV. Residues 385 to 408 are Cytoplasmic-facing; sequence KLLGSVLRGQVATVIKKTLNTDFP. A helical membrane pass occupies residues 409 to 429; it reads FPFAWLTGYLAILVGAGMTFI. Topologically, residues 430-486 are extracellular; sequence VQSSSVFTSAMTPLIGIGVISIERAYPLTLGSNIGTTTTAILAALASPGNTLRSSLQ. A helical membrane pass occupies residues 487 to 507; it reads IALCHFFFNISGILLWYPIPF. Topologically, residues 508–526 are cytoplasmic; that stretch reads TRLPIRLAKGLGNISAKYR. A helical membrane pass occupies residues 527–547; it reads WFAVFYLIFFFLLTPLTVFGL. Residues 548–551 are Extracellular-facing; the sequence is SLAG. A helical transmembrane segment spans residues 552 to 572; sequence WPVLVGVGVPIILLILLVLCL. Over 573–695 the chain is Cytoplasmic; sequence RMLQARCPRI…MKALSNTTVF (123 aa).

Belongs to the SLC34A transporter family. Highly expressed in the lung, in type II alveolar cells. Moderately expressed in kidney followed by small intestine.

Its subcellular location is the apical cell membrane. It carries out the reaction 3 Na(+)(out) + phosphate(out) = 3 Na(+)(in) + phosphate(in). Its function is as follows. Involved in actively transporting phosphate into cells via Na(+) cotransport. In Rattus norvegicus (Rat), this protein is Sodium-dependent phosphate transport protein 2B (Slc34a2).